Consider the following 227-residue polypeptide: Cytochrome c oxidase subunit 2 (227 aa).

The Mitochondrial intermembrane segment spans residues 1–14 (MAYPFQLGFQDASS). Residues 15–45 (PIMEELLHFHDHTLMIVFLISSLVLYIISLM) form a helical membrane-spanning segment. At 46–59 (LTTKLTHTSTMDAQ) the chain is on the mitochondrial matrix side. Residues 60–87 (EVETIWTILPAIILILIALPSLRILYMM) form a helical membrane-spanning segment. At 88–227 (DEINNPSLTV…HFENWSLSMI (140 aa)) the chain is on the mitochondrial intermembrane side. Positions 161, 196, 198, 200, 204, and 207 each coordinate Cu cation. Residue Glu198 coordinates Mg(2+).

It belongs to the cytochrome c oxidase subunit 2 family. In terms of assembly, component of the cytochrome c oxidase (complex IV, CIV), a multisubunit enzyme composed of 14 subunits. The complex is composed of a catalytic core of 3 subunits MT-CO1, MT-CO2 and MT-CO3, encoded in the mitochondrial DNA, and 11 supernumerary subunits COX4I, COX5A, COX5B, COX6A, COX6B, COX6C, COX7A, COX7B, COX7C, COX8 and NDUFA4, which are encoded in the nuclear genome. The complex exists as a monomer or a dimer and forms supercomplexes (SCs) in the inner mitochondrial membrane with NADH-ubiquinone oxidoreductase (complex I, CI) and ubiquinol-cytochrome c oxidoreductase (cytochrome b-c1 complex, complex III, CIII), resulting in different assemblies (supercomplex SCI(1)III(2)IV(1) and megacomplex MCI(2)III(2)IV(2)). Found in a complex with TMEM177, COA6, COX18, COX20, SCO1 and SCO2. Interacts with TMEM177 in a COX20-dependent manner. Interacts with COX20. Interacts with COX16. Requires Cu cation as cofactor.

The protein resides in the mitochondrion inner membrane. It carries out the reaction 4 Fe(II)-[cytochrome c] + O2 + 8 H(+)(in) = 4 Fe(III)-[cytochrome c] + 2 H2O + 4 H(+)(out). Component of the cytochrome c oxidase, the last enzyme in the mitochondrial electron transport chain which drives oxidative phosphorylation. The respiratory chain contains 3 multisubunit complexes succinate dehydrogenase (complex II, CII), ubiquinol-cytochrome c oxidoreductase (cytochrome b-c1 complex, complex III, CIII) and cytochrome c oxidase (complex IV, CIV), that cooperate to transfer electrons derived from NADH and succinate to molecular oxygen, creating an electrochemical gradient over the inner membrane that drives transmembrane transport and the ATP synthase. Cytochrome c oxidase is the component of the respiratory chain that catalyzes the reduction of oxygen to water. Electrons originating from reduced cytochrome c in the intermembrane space (IMS) are transferred via the dinuclear copper A center (CU(A)) of subunit 2 and heme A of subunit 1 to the active site in subunit 1, a binuclear center (BNC) formed by heme A3 and copper B (CU(B)). The BNC reduces molecular oxygen to 2 water molecules using 4 electrons from cytochrome c in the IMS and 4 protons from the mitochondrial matrix. This is Cytochrome c oxidase subunit 2 (MT-CO2) from Oryctolagus cuniculus (Rabbit).